The chain runs to 119 residues: MARIAGVNIPVHKHAWVALTSIYGVGRTRAKAICDEAGVPRDRKVKELTEQELEAIRTALGKYEVEGDLRRAVAMDIKRLMDLGCYRGIRHRRGLPVRGQRTQTNARTRKGPRRGPAGK.

A disordered region spans residues 94 to 119 (GLPVRGQRTQTNARTRKGPRRGPAGK).

This sequence belongs to the universal ribosomal protein uS13 family. As to quaternary structure, part of the 30S ribosomal subunit. Forms a loose heterodimer with protein S19. Forms two bridges to the 50S subunit in the 70S ribosome.

Located at the top of the head of the 30S subunit, it contacts several helices of the 16S rRNA. In the 70S ribosome it contacts the 23S rRNA (bridge B1a) and protein L5 of the 50S subunit (bridge B1b), connecting the 2 subunits; these bridges are implicated in subunit movement. Contacts the tRNAs in the A and P-sites. This chain is Small ribosomal subunit protein uS13, found in Alkalilimnicola ehrlichii (strain ATCC BAA-1101 / DSM 17681 / MLHE-1).